Consider the following 318-residue polypeptide: Acetyl-coenzyme A carboxylase carboxyl transferase subunit alpha (318 aa).

Positions 39–293 constitute a CoA carboxyltransferase C-terminal domain; that stretch reads KLEKKVDKMR…HEALARHLKE (255 aa).

This sequence belongs to the AccA family. As to quaternary structure, acetyl-CoA carboxylase is a heterohexamer composed of biotin carboxyl carrier protein (AccB), biotin carboxylase (AccC) and two subunits each of ACCase subunit alpha (AccA) and ACCase subunit beta (AccD).

The protein localises to the cytoplasm. The catalysed reaction is N(6)-carboxybiotinyl-L-lysyl-[protein] + acetyl-CoA = N(6)-biotinyl-L-lysyl-[protein] + malonyl-CoA. Its pathway is lipid metabolism; malonyl-CoA biosynthesis; malonyl-CoA from acetyl-CoA: step 1/1. Functionally, component of the acetyl coenzyme A carboxylase (ACC) complex. First, biotin carboxylase catalyzes the carboxylation of biotin on its carrier protein (BCCP) and then the CO(2) group is transferred by the carboxyltransferase to acetyl-CoA to form malonyl-CoA. This Geobacter metallireducens (strain ATCC 53774 / DSM 7210 / GS-15) protein is Acetyl-coenzyme A carboxylase carboxyl transferase subunit alpha.